The sequence spans 343 residues: GTPase Obg (343 aa).

In terms of domain architecture, Obg spans 1–159; sequence MKFLDEAKVY…HWLWLRLKLI (159 aa). The OBG-type G domain maps to 160 to 327; that stretch reads ADAGLVGLPN…ALRALLAAMD (168 aa). Residues 166-173, 191-195, 212-215, 279-282, and 308-310 each bind GTP; these read GLPNAGKS, FTTLH, DIPG, SKAD, and SAA. Ser173 and Thr193 together coordinate Mg(2+).

Belongs to the TRAFAC class OBG-HflX-like GTPase superfamily. OBG GTPase family. As to quaternary structure, monomer. Requires Mg(2+) as cofactor.

Its subcellular location is the cytoplasm. In terms of biological role, an essential GTPase which binds GTP, GDP and possibly (p)ppGpp with moderate affinity, with high nucleotide exchange rates and a fairly low GTP hydrolysis rate. Plays a role in control of the cell cycle, stress response, ribosome biogenesis and in those bacteria that undergo differentiation, in morphogenesis control. This chain is GTPase Obg, found in Methylobacterium sp. (strain 4-46).